Here is a 663-residue protein sequence, read N- to C-terminus: GPI mannosyltransferase 3 (663 aa).

Residues 1-11 show a composition bias toward basic residues; that stretch reads MPMSARSRRSN. Residues 1–44 form a disordered region; it reads MPMSARSRRSNPRLPPSPSSSSSSDAVRASPHSSPPSRLRPPSA. Positions 19 to 42 are enriched in low complexity; that stretch reads SSSSSSDAVRASPHSSPPSRLRPP. Transmembrane regions (helical) follow at residues 47–67, 110–130, 137–157, 226–246, 269–289, 304–324, 335–355, and 367–387; these read DVSS…ALTV, PLIF…LGLT, LLIA…DFYT, VLAV…FPPL, YASQ…LVGL, GSIL…LSVI, LLPA…IPAL, and LTLI…TLFH. Positions 492-512 are disordered; that stretch reads HIPRRPSYATPPSSQRQPTQL. The segment covering 501–511 has biased composition (polar residues); sequence TPPSSQRQPTQ.

Belongs to the glycosyltransferase 22 family. PIGB subfamily.

It localises to the endoplasmic reticulum membrane. The protein operates within glycolipid biosynthesis; glycosylphosphatidylinositol-anchor biosynthesis. In terms of biological role, mannosyltransferase involved in glycosylphosphatidylinositol-anchor biosynthesis. Transfers the third mannose to Man2-GlcN-acyl-PI during GPI precursor assembly. The protein is GPI mannosyltransferase 3 (gpi10) of Emericella nidulans (strain FGSC A4 / ATCC 38163 / CBS 112.46 / NRRL 194 / M139) (Aspergillus nidulans).